Reading from the N-terminus, the 944-residue chain is Probable tape measure protein (944 aa).

Residues 13-52 (RMRDEASRTLRQVRDATRALQNQTNSTSQAQERLQEQFRK) adopt a coiled-coil conformation.

This sequence belongs to the P2likevirus tape measure protein family.

Serves as a base for tail tube protein polymerization and acts as a template for tail length determination. The polypeptide is Probable tape measure protein (Clostridioides difficile (Peptoclostridium difficile)).